Reading from the N-terminus, the 307-residue chain is Protein EI24 homolog (307 aa).

2 helical membrane-spanning segments follow: residues 53 to 73 (FIHC…IYLY) and 92 to 112 (MFTI…SIIA). N-linked (GlcNAc...) asparagine glycosylation is present at Asn135. The next 4 helical transmembrane spans lie at 153-173 (LFGV…TNFI), 175-195 (FVII…ILRG), 225-245 (FFFP…LFII), and 260-280 (GILP…NVIL).

Belongs to the EI24 family.

It localises to the membrane. This Dictyostelium discoideum (Social amoeba) protein is Protein EI24 homolog.